Consider the following 465-residue polypeptide: UDP-N-acetylmuramate--L-alanine ligase (465 aa).

Residue 112–118 participates in ATP binding; it reads GTHGKTT.

It belongs to the MurCDEF family.

Its subcellular location is the cytoplasm. It carries out the reaction UDP-N-acetyl-alpha-D-muramate + L-alanine + ATP = UDP-N-acetyl-alpha-D-muramoyl-L-alanine + ADP + phosphate + H(+). It participates in cell wall biogenesis; peptidoglycan biosynthesis. Functionally, cell wall formation. The protein is UDP-N-acetylmuramate--L-alanine ligase of Burkholderia ambifaria (strain ATCC BAA-244 / DSM 16087 / CCUG 44356 / LMG 19182 / AMMD) (Burkholderia cepacia (strain AMMD)).